The sequence spans 342 residues: Mitogen-activated protein kinase kinase kinase 20 (342 aa).

Residues 3 to 268 (WVRGETIGFG…AEMLLNHSFV (266 aa)) form the Protein kinase domain. 9-17 (IGFGTFSTV) is an ATP binding site. Ser-18 is modified (phosphoserine). The residue at position 19 (Thr-19) is a Phosphothreonine. Lys-36 provides a ligand contact to ATP. A phosphotyrosine mark is found at Tyr-41 and Tyr-66. 2 positions are modified to phosphoserine: Ser-93 and Ser-114. The Proton acceptor role is filled by Asp-131. The tract at residues 285–342 (KDEDKVLMSPKCPFEFDDWDSFTLDSNPSFDSPVERLGSLVSGSIPDWSVGGSWLTVR) is required for MKK3 binding.

It belongs to the protein kinase superfamily. Ser/Thr protein kinase family. As to quaternary structure, interacts with MKK3 and MPK18 via its C-terminal domain. Binds to MKK5. Autophosphorylates; active in phosphorylated state. Dephosphorylated by ABI1. As to expression, expressed in roots, seedlings, leaves, flower buds, flowers and siliques.

The protein localises to the nucleus. Its subcellular location is the cytoplasm. The enzyme catalyses L-seryl-[protein] + ATP = O-phospho-L-seryl-[protein] + ADP + H(+). It carries out the reaction L-threonyl-[protein] + ATP = O-phospho-L-threonyl-[protein] + ADP + H(+). Its activity is regulated as follows. Activated through serine, threonine and tyrosine phosphorylation, especially upon abscisic acid (ABA) treatment. Restricted activity by ABI1-mediated dephosphorylation. Mitogen-activated protein kinase kinase (MAPKK) that phosphorylates both MKK3 and MPK18 and regulate two separate signaling pathways involved in root microtubule functions. MAPKK which regulates abscisic acid (ABA) responses in a MAPKKK20-MKK5-MPK6 cascade involved in root growth (e.g. root cell division and elongation) and stomatal response, probably via MKK5 activation by protein phosphorylation and subsequent activation of MAPK6 by MKK5. Involved in various abiotic stresses (e.g. osmotic stress, cold and hydrogen peroxide) responses by phosphorylating and thus regulating MPK6 activity, in an ABA-independent manner. This Arabidopsis thaliana (Mouse-ear cress) protein is Mitogen-activated protein kinase kinase kinase 20.